Here is a 305-residue protein sequence, read N- to C-terminus: Foldase protein PrsA (305 aa).

An N-terminal signal peptide occupies residues methionine 1–glycine 19. The N-palmitoyl cysteine moiety is linked to residue cysteine 20. A lipid anchor (S-diacylglycerol cysteine) is attached at cysteine 20. Positions glutamate 136–lysine 235 constitute a PpiC domain.

The protein belongs to the PrsA family.

Its subcellular location is the cell membrane. The enzyme catalyses [protein]-peptidylproline (omega=180) = [protein]-peptidylproline (omega=0). Functionally, plays a major role in protein secretion by helping the post-translocational extracellular folding of several secreted proteins. In Levilactobacillus brevis (strain ATCC 367 / BCRC 12310 / CIP 105137 / JCM 1170 / LMG 11437 / NCIMB 947 / NCTC 947) (Lactobacillus brevis), this protein is Foldase protein PrsA.